The primary structure comprises 431 residues: Homogentisate 1,2-dioxygenase (431 aa).

Histidine 286 functions as the Proton acceptor in the catalytic mechanism. Fe cation is bound by residues histidine 329 and glutamate 335. Residues tyrosine 344 and histidine 365 each coordinate homogentisate. Histidine 365 contacts Fe cation.

The protein belongs to the homogentisate dioxygenase family. In terms of assembly, hexamer; dimer of trimers. Fe cation is required as a cofactor.

It catalyses the reaction homogentisate + O2 = 4-maleylacetoacetate + H(+). It participates in amino-acid degradation; L-phenylalanine degradation; acetoacetate and fumarate from L-phenylalanine: step 4/6. Involved in the catabolism of homogentisate (2,5-dihydroxyphenylacetate or 2,5-OH-PhAc), a central intermediate in the degradation of phenylalanine and tyrosine. Catalyzes the oxidative ring cleavage of the aromatic ring of homogentisate to yield maleylacetoacetate. The sequence is that of Homogentisate 1,2-dioxygenase from Pseudomonas fluorescens (strain Pf0-1).